The sequence spans 873 residues: Bifunctional uridylyltransferase/uridylyl-removing enzyme (873 aa).

The segment at 1–332 is uridylyltransferase; the sequence is MPYQCPITFN…NGGQTQEAEI (332 aa). The segment at 333 to 692 is uridylyl-removing; sequence LDNDFQRRGS…ISKKATRGGT (360 aa). Residues 451 to 573 form the HD domain; it reads VDEHSIRLLK…VRDEESLELL (123 aa). ACT domains follow at residues 693-777 and 800-873; these read EVFV…RTPR and LMEL…ELAP.

It belongs to the GlnD family. Mg(2+) serves as cofactor.

The catalysed reaction is [protein-PII]-L-tyrosine + UTP = [protein-PII]-uridylyl-L-tyrosine + diphosphate. The enzyme catalyses [protein-PII]-uridylyl-L-tyrosine + H2O = [protein-PII]-L-tyrosine + UMP + H(+). Uridylyltransferase (UTase) activity is inhibited by glutamine, while glutamine activates uridylyl-removing (UR) activity. In terms of biological role, modifies, by uridylylation and deuridylylation, the PII regulatory proteins (GlnB and homologs), in response to the nitrogen status of the cell that GlnD senses through the glutamine level. Under low glutamine levels, catalyzes the conversion of the PII proteins and UTP to PII-UMP and PPi, while under higher glutamine levels, GlnD hydrolyzes PII-UMP to PII and UMP (deuridylylation). Thus, controls uridylylation state and activity of the PII proteins, and plays an important role in the regulation of nitrogen assimilation and metabolism. This is Bifunctional uridylyltransferase/uridylyl-removing enzyme from Vibrio atlanticus (strain LGP32) (Vibrio splendidus (strain Mel32)).